The sequence spans 1098 residues: Ubiquitin carboxyl-terminal hydrolase 36 (1098 aa).

Residues 72–86 show a composition bias toward basic and acidic residues; it reads RHRSGDELQARKPGT. Positions 72 to 97 are disordered; sequence RHRSGDELQARKPGTERVSGSGGDGV. A USP domain is found at 122 to 423; sequence AGLHNLGNTC…QAYVLFYLRI (302 aa). The active-site Nucleophile is C131. H382 functions as the Proton acceptor in the catalytic mechanism. 2 disordered regions span residues 428-464 and 483-574; these read KSPE…VPSP and EVGV…RDTI. S429, S463, S547, and S578 each carry phosphoserine. Residues 540 to 558 are compositionally biased toward low complexity; it reads PLQSLTTSPTTSQGSPGTG. The segment at 589 to 640 is disordered; sequence GHRLKGEGSGVDLEKGDSSSSSPEHSASSDPAKAPQTAESRAAHACDSQGTN. Residues 606–617 are compositionally biased toward low complexity; the sequence is SSSSSPEHSASS. S663 carries the phosphoserine modification. Disordered regions lie at residues 664–710 and 722–973; these read PALS…SPSA and HPVV…ALSV. The span at 665 to 677 shows a compositional bias: polar residues; it reads ALSSTTTEPTSLM. S678 is modified (phosphoserine). The segment covering 683–692 has biased composition (low complexity); that stretch reads KKLALSAKKA. Residue S709 is modified to Phosphoserine. Positions 746 to 763 are enriched in low complexity; the sequence is HPHSASLSSSSAKPLGTS. Over residues 853–878 the composition is skewed to polar residues; sequence GQFQDQSWSSGSQKEEGTQPQVNGHQ. The span at 889–898 shows a compositional bias: basic residues; sequence SSRKRRKRKR. Residues 901–917 show a composition bias toward polar residues; sequence GLSQEATPSQDLIQHSC. Residues 921–932 show a composition bias toward basic and acidic residues; it reads DHSEPEARTELQ. Residues 933–943 are compositionally biased toward basic residues; that stretch reads KKKKKKRRKRK. The span at 944–960 shows a compositional bias: basic and acidic residues; sequence PEPQQDEESKHPGDQRS.

It belongs to the peptidase C19 family. Interacts with isoform 3 of FBXW7; the interaction inhibits MYC degradation induced by SCF(FBW7) complex. Interacts with NTRK1; USP36 does not deubiquitinate NTRK1. Interacts with NEDD4L (via domains WW1, 3 and 4); the interaction inhibits ubiquitination of, at least, NTRK1, KCNQ2 and KCNQ3 by NEDD4L. Interacts (via C-terminus) with EXOSC10 (via C-terminus); the interaction is facilitated by the association with RNA and promotes sumoylation of EXOSC10. Post-translationally, polyubiquitinated by NEDD4L, no effect on USP36 protein levels. Both proteins interact with and regulate each other's ubiquitination levels.

It is found in the nucleus. Its subcellular location is the nucleolus. The protein localises to the cytoplasm. It carries out the reaction Thiol-dependent hydrolysis of ester, thioester, amide, peptide and isopeptide bonds formed by the C-terminal Gly of ubiquitin (a 76-residue protein attached to proteins as an intracellular targeting signal).. In terms of biological role, deubiquitinase essential for the regulation of nucleolar structure and function. Required for cell and organism viability. Plays an important role in ribosomal RNA processing and protein synthesis, which is mediated, at least in part, through deubiquitination of DHX33, NPM1 and FBL, regulating their protein stability. Functions as a transcriptional repressor by deubiquiting histone H2B at the promoters of genes critical for cellular differentiation, such as CDKN1A, thereby preventing histone H3 'Lys-4' trimethylation (H3K4). Specifically deubiquitinates MYC in the nucleolus, leading to prevent MYC degradation by the proteasome: acts by specifically interacting with isoform 3 of FBXW7 (FBW7gamma) in the nucleolus and counteracting ubiquitination of MYC by the SCF(FBW7) complex. In contrast, it does not interact with isoform 1 of FBXW7 (FBW7alpha) in the nucleoplasm. Interacts to and regulates the actions of E3 ubiquitin-protein ligase NEDD4L over substrates such as NTRK1, KCNQ2 and KCNQ3, affecting their expression an functions. Deubiquitinates SOD2, regulates SOD2 protein stability. Deubiquitinase activity is required to control selective autophagy activation by ubiquitinated proteins. Promotes CEP63 stabilization through 'Lys-48'-linked deubiquitination leading to increased stability. Acts as a SUMO ligase to promote EXOSC10 sumoylation critical for the nucleolar RNA exosome function in rRNA processing. Binds to pre-rRNAs. This is Ubiquitin carboxyl-terminal hydrolase 36 (Usp36) from Mus musculus (Mouse).